A 179-amino-acid polypeptide reads, in one-letter code: Large ribosomal subunit protein uL6 (179 aa).

The protein belongs to the universal ribosomal protein uL6 family. Part of the 50S ribosomal subunit.

This protein binds to the 23S rRNA, and is important in its secondary structure. It is located near the subunit interface in the base of the L7/L12 stalk, and near the tRNA binding site of the peptidyltransferase center. The sequence is that of Large ribosomal subunit protein uL6 from Clostridium perfringens (strain ATCC 13124 / DSM 756 / JCM 1290 / NCIMB 6125 / NCTC 8237 / Type A).